The chain runs to 118 residues: Mediator of RNA polymerase II transcription subunit 11 (118 aa).

Belongs to the Mediator complex subunit 11 family. In terms of assembly, component of the Mediator complex.

The protein localises to the nucleus. Its function is as follows. Component of the Mediator complex, a coactivator involved in the regulated transcription of nearly all RNA polymerase II-dependent genes. Mediator functions as a bridge to convey information from gene-specific regulatory proteins to the basal RNA polymerase II transcription machinery. Mediator is recruited to promoters by direct interactions with regulatory proteins and serves as a scaffold for the assembly of a functional pre-initiation complex with RNA polymerase II and the general transcription factors. The protein is Mediator of RNA polymerase II transcription subunit 11 (med11) of Xenopus tropicalis (Western clawed frog).